Consider the following 493-residue polypeptide: Insulinoma-associated protein 2 (493 aa).

Positions 1 to 12 (MPRGFLVKRTKR) are enriched in basic residues. Residues 1 to 20 (MPRGFLVKRTKRSGSSYRAR) are SNAG domain. The tract at residues 1–77 (MPRGFLVKRT…PGPSPARPAG (77 aa)) is disordered. The C2H2-type 1; atypical zinc-finger motif lies at 203-223 (FICQLCKHQYADPFALAQHRC). The C2H2-type 2 zinc-finger motif lies at 231–253 (YRCPECDKVFSCPANLASHRRWH). The segment at 248–310 (SHRRWHKPRP…SGDGQHRDSA (63 aa)) is disordered. Pro residues predominate over residues 267–276 (PHAPLTPPDP). Basic and acidic residues predominate over residues 283 to 294 (ENGRVPRTDDQH). C2H2-type zinc fingers lie at residues 354–376 (FVCPYCHKKFRRQAYLRKHLGTH), 398–420 (FACPLCGAHFPSADIREKHRLWH), and 452–475 (FSCKYCPSTFFSSPGLTRHINKCH).

Expressed in spleen, stomach, liver, kidney and testis. In the pancreas, expressed in islet cells, including insulin-producing beta-cells, but not in acinar cells (at protein level). In the brain, expressed in the neuronal cells of the cerebral cortex, the Purkinje cells of the cerebellum and the hippocampal region including CA1 and CA3 (at protein level).

It localises to the cytoplasm. Its subcellular location is the nucleus. Its function is as follows. May function as a growth suppressor or tumor suppressor in liver cells and in certain neurons. The sequence is that of Insulinoma-associated protein 2 (Insm2) from Mus musculus (Mouse).